The following is a 314-amino-acid chain: Aryldialkylphosphatase (314 aa).

The Fe cation site is built by His-22, His-24, and Lys-137. Residues Lys-137, His-170, and His-199 each coordinate Co(2+). Lys-137 bears the N6-carboxylysine mark. Residue Asp-256 coordinates Fe cation.

It belongs to the metallo-dependent hydrolases superfamily. Phosphotriesterase family. As to quaternary structure, homodimer. It depends on Co(2+) as a cofactor. Fe cation serves as cofactor.

The catalysed reaction is An aryl dialkyl phosphate + H2O = dialkyl phosphate + an aryl alcohol.. Its activity is regulated as follows. Inactivated by EDTA and o-phenanthroline. In terms of biological role, has a low paraoxonase activity. Also active, but with a lower activity, against other organo-phosphorus insecticides such as Dursban, Coumaphos, pNP-butanoate or parathion. This chain is Aryldialkylphosphatase (php), found in Saccharolobus solfataricus (strain ATCC 35092 / DSM 1617 / JCM 11322 / P2) (Sulfolobus solfataricus).